Here is a 469-residue protein sequence, read N- to C-terminus: Properdin (469 aa).

Positions Met-1–Ser-27 are cleaved as a signal peptide. TSP type-1 domains are found at residues Asp-28–Arg-76, Ser-77–Pro-134, Met-136–Pro-191, His-193–Pro-255, Ala-257–Pro-313, Asp-315–Pro-377, and Lys-379–Lys-462. Disulfide bonds link Cys-32–Cys-56, Cys-43–Cys-72, and Cys-57–Cys-75. 2 C-linked (Man) tryptophan glycosylation sites follow: Trp-83 and Trp-86. Intrachain disulfides connect Cys-89/Cys-127, Cys-93/Cys-133, Cys-104/Cys-111, Cys-132/Cys-170, Cys-148/Cys-184, Cys-152/Cys-190, and Cys-163/Cys-174. O-linked (Fuc...) threonine glycosylation is present at Thr-92. C-linked (Man) tryptophan glycans are attached at residues Trp-139, Trp-142, and Trp-145. Thr-151 is a glycosylation site (O-linked (Fuc...) threonine). 3 C-linked (Man) tryptophan glycosylation sites follow: Trp-196, Trp-199, and Trp-202. Intrachain disulfides connect Cys-205-Cys-248, Cys-209-Cys-254, and Cys-224-Cys-238. A glycan (O-linked (Fuc...) serine) is linked at Ser-208. A disordered region spans residues Thr-219–Cys-238. Trp-260 and Trp-263 each carry a C-linked (Man) tryptophan glycan. 3 disulfides stabilise this stretch: Cys-269-Cys-306, Cys-273-Cys-312, and Cys-284-Cys-296. Thr-272 carries an O-linked (Fuc...) threonine glycan. 2 C-linked (Man) tryptophan glycosylation sites follow: Trp-321 and Trp-324. 3 cysteine pairs are disulfide-bonded: Cys-327–Cys-370, Cys-337–Cys-376, and Cys-350–Cys-360. The interval Arg-351–Arg-359 is interaction with Complement C3 beta chain. Residues Trp-382, Trp-385, and Trp-388 are each glycosylated (C-linked (Man) tryptophan). Cystine bridges form between Cys-391-Cys-455, Cys-395-Cys-461, and Cys-407-Cys-439. Asn-428 carries an N-linked (GlcNAc...) (complex) asparagine glycan.

In plasma, properdin exists as dimers, trimers or tetramers in the relative proportions of 26:54:20. Interacts with the pro-C3-convertase enzyme complex (C3b-Bb) comprised of Complement C3 beta chain (C3b) and the Complement factor B Bb fragment (Bb), where it binds (via its TSP type-1 5 domain) with C3b and Bb. This interaction stabilizes the complex and allows it to become the active C3-convertase enzyme complex (C3b-Bb-FP). Interacts with C3b. Interacts with CFB.

It localises to the secreted. In terms of biological role, a positive regulator of the alternate pathway (AP) of complement. It binds to and stabilizes the C3- and C5-convertase enzyme complexes. Inhibits CFI-CFH mediated degradation of Complement C3 beta chain (C3b). This is Properdin from Homo sapiens (Human).